The chain runs to 423 residues: MTVDLLLGLQWGDEGKGKIVDVLTSNYDIIARFQGGPNAGHTLEFDGIKHVLRTIPSGIFHKDSVNIIGNGVVIDPVVFQKEIEGLEKFNLDIKKKLIISRKAHLILPTHRLLDAASEASKGKAKIGSTLKGIGPTYMDKTGRNGLRVGDIELEDFKERYRSLADKHEAMIAFYDVNIQYNLAELEKEFFEAIEELKKLDFIDSEEYMHQAQKAGKSILCEGAQGSLLDVDFGTYPFVTSSNTTAAGACTGLGIAPNKIKEVYGIFKAYVTRVGSGPFPTELFDEVGATMARVGNEFGSVTGRQRRCGWLDLVALKYAVQVNGVTQLMMMKGDVLSGFETLKVCTEYNYKGQNISHFPYNIEPENVTPVYKEFKGWKQDLTGLTTYDQLPVELKEYIEFIEKEIEVPIKIVSVGPDRKQTITK.

GTP-binding positions include 12-18 and 40-42; these read GDEGKGK and GHT. Asp13 (proton acceptor) is an active-site residue. Mg(2+) is bound by residues Asp13 and Gly40. Residues 13 to 16, 38 to 41, Thr129, Arg143, Gln224, Thr239, and Arg303 each bind IMP; these read DEGK and NAGH. The active-site Proton donor is the His41. 299-305 contributes to the substrate binding site; sequence SVTGRQR. Residues Arg305, 331-333, and 412-414 each bind GTP; these read KGD and SVG.

Belongs to the adenylosuccinate synthetase family. In terms of assembly, homodimer. The cofactor is Mg(2+).

Its subcellular location is the cytoplasm. It carries out the reaction IMP + L-aspartate + GTP = N(6)-(1,2-dicarboxyethyl)-AMP + GDP + phosphate + 2 H(+). It functions in the pathway purine metabolism; AMP biosynthesis via de novo pathway; AMP from IMP: step 1/2. Functionally, plays an important role in the de novo pathway of purine nucleotide biosynthesis. Catalyzes the first committed step in the biosynthesis of AMP from IMP. In Flavobacterium johnsoniae (strain ATCC 17061 / DSM 2064 / JCM 8514 / BCRC 14874 / CCUG 350202 / NBRC 14942 / NCIMB 11054 / UW101) (Cytophaga johnsonae), this protein is Adenylosuccinate synthetase.